Here is a 357-residue protein sequence, read N- to C-terminus: Fluoren-9-ol dehydrogenase (357 aa).

NADP(+) contacts are provided by residues 36–67 and D87; that span reads VTGGARGIGRSLCEGLLRAGAKVVAADLTWDD. The Proton acceptor role is filled by Y198. An NADP(+)-binding site is contributed by K202.

This sequence belongs to the short-chain dehydrogenases/reductases (SDR) family.

It catalyses the reaction 9H-fluoren-9-ol + NADP(+) = 9H-fluoren-9-one + NADPH + H(+). It carries out the reaction 9H-fluoren-9-ol + NAD(+) = 9H-fluoren-9-one + NADH + H(+). The protein operates within aromatic compound metabolism. Functionally, catalyzes the dehydrogenation of both 9-fluorenol and 1,1a-dihydroxy-1-hydro-9-fluorenone to produce 9-fluorenone and 2'-carboxy-2,3- dihydroxybiphenyl, respectively. In Terrabacter sp. (strain DBF63), this protein is Fluoren-9-ol dehydrogenase.